The following is a 150-amino-acid chain: uncharacterized protein (150 aa).

This is an uncharacterized protein from Methanocaldococcus jannaschii (strain ATCC 43067 / DSM 2661 / JAL-1 / JCM 10045 / NBRC 100440) (Methanococcus jannaschii).